The sequence spans 133 residues: MVVAQQLGQWAEQTALKLLKEQNYEWVASNYHSRRGEVDLIVKRGNELIFVEVKARGQGNYGQACEMVTLSKQKKIIKTAMRFLQRYPSYQDFYCRFDVICFDFPQKIAKTVQQDFSKFHYDLQWIENAFTLD.

It belongs to the UPF0102 family.

In Acinetobacter baumannii (strain SDF), this protein is UPF0102 protein ABSDF1354.